Reading from the N-terminus, the 431-residue chain is Tol-Pal system protein TolB (431 aa).

A signal peptide spans 1–24 (MMKFLTRMLSAFAVLFFAISTAQA). Residues 318-340 (QVYRMSSSGGAASPVGGRGSAQI) form a disordered region. The span at 323-332 (SSSGGAASPV) shows a compositional bias: low complexity.

The protein belongs to the TolB family. As to quaternary structure, the Tol-Pal system is composed of five core proteins: the inner membrane proteins TolA, TolQ and TolR, the periplasmic protein TolB and the outer membrane protein Pal. They form a network linking the inner and outer membranes and the peptidoglycan layer.

It is found in the periplasm. In terms of biological role, part of the Tol-Pal system, which plays a role in outer membrane invagination during cell division and is important for maintaining outer membrane integrity. The chain is Tol-Pal system protein TolB from Mannheimia succiniciproducens (strain KCTC 0769BP / MBEL55E).